Consider the following 163-residue polypeptide: Protein GOLVEN 3 (163 aa).

The N-terminal stretch at 1 to 20 is a signal peptide; it reads MMRFTIIVIAFLLIIQSLEE. Residues 21-141 constitute a propeptide that is removed on maturation; sequence EHILVYAHEG…MEKLARLLRD (121 aa). Sulfotyrosine is present on tyrosine 143. The disordered stretch occupies residues 144–163; sequence PIYSKPRRKPPVNNRAPDKF. Hydroxyproline is present on proline 154. Positions 158 to 163 are excised as a propeptide; that stretch reads RAPDKF.

The protein belongs to the RGF family. In terms of assembly, binds to LRR receptor-like serine/threonine-protein kinases RGI1, RGI2 and RGI3 to trigger their dimerization with SERK proteins and subsequent signaling. Expressed in roots, specifically in the root apical meristem (RAM).

It localises to the secreted. In terms of biological role, signaling peptide (root growth factor) required during root gravitropism in a PIN2-traffic dependent manner, thus influencing the formation of auxin gradients. Maintains the postembryonic root stem cell niche. This Arabidopsis thaliana (Mouse-ear cress) protein is Protein GOLVEN 3.